The following is a 493-amino-acid chain: MSQHSQYGVPGVPAQSSLSFTQGFLLGQLSVVLLIGAFIKFFIFGEAPAPPSRGLASRTASHHRSYSINQGDNNANNNTNNGSSPRTLREKPSTSNVLRPVPSSATNTRSILRKTYYNAIPTQLSHTKQGRHRIQHSTHQPESLDWFNVLIAQTIAQYRQTAYLLKDSPTSSILDSLSAAINDPQKKPSFIDTIKVTDISLGEEFPIFSNCRVIAVDDSNSDGGRLQALMDVDLSDDNLSLAIETSLILNYPKPRSAVLPVALSVSVVRFSGTLCISLIPASTPQSPSSAPTPDAGNLNMRSLFQHISAELNGTAPNPTATNPSGKKGVPKTNLAFSFLPDYRLDLSVRSLIGSRSRLQDVPKVAQLVEARIQSWFEERVVEPRVQVVGLPDFWPRMGRTGVRPGDDVEAAAAAAAASVSSRSGGGPVEATTLSGSAEEAIIDDSPVRPGLRFRGSATATAGRSDSSFEEIPRASPQTPLDIPGSMPRVVRTP.

Residues 1 to 23 (MSQHSQYGVPGVPAQSSLSFTQG) lie on the Lumenal side of the membrane. A helical membrane pass occupies residues 24 to 44 (FLLGQLSVVLLIGAFIKFFIF). Over 45-493 (GEAPAPPSRG…GSMPRVVRTP (449 aa)) the chain is Cytoplasmic. The interval 52–104 (SRGLASRTASHHRSYSINQGDNNANNNTNNGSSPRTLREKPSTSNVLRPVPSS) is disordered. A compositionally biased stretch (low complexity) spans 69–81 (NQGDNNANNNTNN). Over residues 93-104 (STSNVLRPVPSS) the composition is skewed to polar residues. The SMP-LTD domain occupies 140–391 (QPESLDWFNV…EPRVQVVGLP (252 aa)). The segment at 420 to 493 (SSRSGGGPVE…GSMPRVVRTP (74 aa)) is disordered.

Belongs to the MMM1 family. In terms of assembly, homodimer. Component of the ER-mitochondria encounter structure (ERMES) or MDM complex, composed of mmm1, mdm10, mdm12 and mdm34. A mmm1 homodimer associates with one molecule of mdm12 on each side in a pairwise head-to-tail manner, and the SMP-LTD domains of mmm1 and mdm12 generate a continuous hydrophobic tunnel for phospholipid trafficking.

It is found in the endoplasmic reticulum membrane. Its function is as follows. Component of the ERMES/MDM complex, which serves as a molecular tether to connect the endoplasmic reticulum (ER) and mitochondria. Components of this complex are involved in the control of mitochondrial shape and protein biogenesis, and function in nonvesicular lipid trafficking between the ER and mitochondria. The mdm12-mmm1 subcomplex functions in the major beta-barrel assembly pathway that is responsible for biogenesis of all outer membrane beta-barrel proteins, and acts in a late step after the SAM complex. The mdm10-mdm12-mmm1 subcomplex further acts in the TOM40-specific pathway after the action of the mdm12-mmm1 complex. Essential for establishing and maintaining the structure of mitochondria and maintenance of mtDNA nucleoids. This chain is Maintenance of mitochondrial morphology protein 1, found in Talaromyces stipitatus (strain ATCC 10500 / CBS 375.48 / QM 6759 / NRRL 1006) (Penicillium stipitatum).